Consider the following 423-residue polypeptide: ATP-citrate synthase alpha chain protein 2 (423 aa).

Citrate-binding residues include asparagine 343, threonine 345, and arginine 376.

Belongs to the succinate/malate CoA ligase beta subunit family. As to quaternary structure, heterooctamer of 4 alpha and 4 beta chains.

The protein resides in the cytoplasm. It localises to the cytosol. It catalyses the reaction oxaloacetate + acetyl-CoA + ADP + phosphate = citrate + ATP + CoA. In terms of biological role, ATP citrate-lyase is the primary enzyme responsible for the synthesis of cytosolic acetyl-CoA, used for the elongation of fatty acids and biosynthesis of isoprenoids, flavonoids and malonated derivatives. May supply substrate to the cytosolic acetyl-CoA carboxylase, which generates the malonyl-CoA used for the synthesis of a multitude of compounds, including very long chain fatty acids and flavonoids. In contrast to all known animal ACL enzymes having a homomeric structure, plant ACLs are composed of alpha and beta chains. The sequence is that of ATP-citrate synthase alpha chain protein 2 (ACLA-2) from Oryza sativa subsp. japonica (Rice).